A 69-amino-acid polypeptide reads, in one-letter code: DNA-directed RNA polymerase subunit epsilon (69 aa).

The protein belongs to the RNA polymerase subunit epsilon family. In terms of assembly, RNAP is composed of a core of 2 alpha, a beta and a beta' subunit. The core is associated with a delta subunit, and at least one of epsilon or omega. When a sigma factor is associated with the core the holoenzyme is formed, which can initiate transcription.

The catalysed reaction is RNA(n) + a ribonucleoside 5'-triphosphate = RNA(n+1) + diphosphate. A non-essential component of RNA polymerase (RNAP). The sequence is that of DNA-directed RNA polymerase subunit epsilon from Bacillus velezensis (strain DSM 23117 / BGSC 10A6 / LMG 26770 / FZB42) (Bacillus amyloliquefaciens subsp. plantarum).